The sequence spans 382 residues: UDP-N-acetylglucosamine--N-acetylmuramyl-(pentapeptide) pyrophosphoryl-undecaprenol N-acetylglucosamine transferase (382 aa).

UDP-N-acetyl-alpha-D-glucosamine contacts are provided by residues 11–13 (TGG), asparagine 124, arginine 164, serine 192, and glutamine 314.

This sequence belongs to the glycosyltransferase 28 family. MurG subfamily.

It localises to the cell membrane. It catalyses the reaction di-trans,octa-cis-undecaprenyl diphospho-N-acetyl-alpha-D-muramoyl-L-alanyl-D-glutamyl-meso-2,6-diaminopimeloyl-D-alanyl-D-alanine + UDP-N-acetyl-alpha-D-glucosamine = di-trans,octa-cis-undecaprenyl diphospho-[N-acetyl-alpha-D-glucosaminyl-(1-&gt;4)]-N-acetyl-alpha-D-muramoyl-L-alanyl-D-glutamyl-meso-2,6-diaminopimeloyl-D-alanyl-D-alanine + UDP + H(+). It participates in cell wall biogenesis; peptidoglycan biosynthesis. Its function is as follows. Cell wall formation. Catalyzes the transfer of a GlcNAc subunit on undecaprenyl-pyrophosphoryl-MurNAc-pentapeptide (lipid intermediate I) to form undecaprenyl-pyrophosphoryl-MurNAc-(pentapeptide)GlcNAc (lipid intermediate II). This chain is UDP-N-acetylglucosamine--N-acetylmuramyl-(pentapeptide) pyrophosphoryl-undecaprenol N-acetylglucosamine transferase, found in Deinococcus deserti (strain DSM 17065 / CIP 109153 / LMG 22923 / VCD115).